The following is an 859-amino-acid chain: Leucine--tRNA ligase (859 aa).

Positions 42-52 (PYPSGRLHMGH) match the 'HIGH' region motif. Residues 618–622 (KMSKS) carry the 'KMSKS' region motif. Lysine 621 is a binding site for ATP.

Belongs to the class-I aminoacyl-tRNA synthetase family.

The protein localises to the cytoplasm. The catalysed reaction is tRNA(Leu) + L-leucine + ATP = L-leucyl-tRNA(Leu) + AMP + diphosphate. This Shewanella oneidensis (strain ATCC 700550 / JCM 31522 / CIP 106686 / LMG 19005 / NCIMB 14063 / MR-1) protein is Leucine--tRNA ligase.